A 659-amino-acid chain; its full sequence is RNA-binding E3 ubiquitin-protein ligase MEX3C (659 aa).

Positions 1-15 are enriched in low complexity; the sequence is MPSGSSAALALAAAP. The segment at 1–140 is disordered; the sequence is MPSGSSAALA…EEAEEEDRSS (140 aa). Positions 16–37 are enriched in pro residues; sequence APLPQPPPPPPPPPPPLPPPSG. Residues 64-82 show a composition bias toward low complexity; that stretch reads EPGAPALRAPAAAAQGQAR. A compositionally biased stretch (basic and acidic residues) spans 83–94; that stretch reads RAAELSPEERAP. At Ser88 the chain carries Phosphoserine. Acidic residues predominate over residues 104–137; sequence AELELEEDEEEGEEAELDGDLLEEEELEEAEEED. KH domains lie at 232-293 and 326-387; these read TTEC…KREI and QTTV…REEI. Residues 513 to 569 are disordered; it reads FEPVNPLSGFGSDPSGNMKTQRRGSQPSTPRLSPTFPESIEHPLARRVRSDPPSTGN. Residues 526–544 show a composition bias toward polar residues; the sequence is PSGNMKTQRRGSQPSTPRL. Ser537 and Ser545 each carry phosphoserine. The span at 551–562 shows a compositional bias: basic and acidic residues; that stretch reads SIEHPLARRVRS. The RING-type zinc finger occupies 608 to 648; the sequence is CVICFENEVIAALVPCGHNLFCMECANKICEKRTPSCPVCQ.

In terms of assembly, interacts with USP7, which antagonizes the ability to degrade mRNA. As to expression, highest levels found in fetal brain and testis. Also expressed in thymus, salivary gland and uterus. Highly expressed in cells of the innate immune system, in particular activated NK cells. Week expression in the intestine.

Its subcellular location is the cytoplasm. The protein localises to the nucleus. The catalysed reaction is S-ubiquitinyl-[E2 ubiquitin-conjugating enzyme]-L-cysteine + [acceptor protein]-L-lysine = [E2 ubiquitin-conjugating enzyme]-L-cysteine + N(6)-ubiquitinyl-[acceptor protein]-L-lysine.. Its function is as follows. E3 ubiquitin ligase responsible for the post-transcriptional regulation of common HLA-A allotypes. Binds to the 3' UTR of HLA-A2 mRNA, and regulates its levels by promoting mRNA decay. RNA binding is sufficient to prevent translation, but ubiquitin ligase activity is required for mRNA degradation. In Homo sapiens (Human), this protein is RNA-binding E3 ubiquitin-protein ligase MEX3C (MEX3C).